The following is a 524-amino-acid chain: MFKLLDNFNEKSKSIMIEQMKQQYCLLQYDKEMVTNFLNFINHHYIWNCYHNNSNNSYNNDLDMNNIQEKLIIEHLDPLMLINSYTDYPFWSSMLMLAVNEAVTTTTTTTTTTTTSTTTTTSGIIPLSSTIIPSTIISPVKTSLSSLSMMTIDDLQNDISKINYEEDFFSKLLKCTLIRNENSYSNEIEQLSLSSSSSSSSSSSSSSSSSSCSTNSSSSVYMSEKKANGFFVKDILSFDKHKVIRRQKTDDSFEKEVLVKGRDEEKKEEVQGRQKKDNINKYKIINCTDISHNNMNYVCDNSKEPQVENLQKNKLINKFTVGSEEEEDNDDINDAAKNNNTNYLRKTVSDDGMKLKSNRNHNKKLGSRGRIHEITSSNKLNTNDPSRLHLPAWVFCTRYSDRPSSGPRIRKPRMNRSNDELNLKRPRTSFTVPQLKRLSQEFEKNRYLDELRRKKLATELDLRESQVKIWFQNKRAKTKKASGAQNCLALHLMAEGLYNHSVRVRSDIEEDEEDSDDMNTSEKE.

A disordered region spans residues 194 to 218 (SSSSSSSSSSSSSSSSSSCSTNSSS). The segment at residues 423-482 (LKRPRTSFTVPQLKRLSQEFEKNRYLDELRRKKLATELDLRESQVKIWFQNKRAKTKKAS) is a DNA-binding region (homeobox).

The protein belongs to the engrailed homeobox family.

The protein resides in the nucleus. The sequence is that of Homeobox protein engrailed-like SMOX-2 (SMOX-2) from Schistosoma mansoni (Blood fluke).